We begin with the raw amino-acid sequence, 115 residues long: Large ribosomal subunit protein bL20c (115 aa).

It belongs to the bacterial ribosomal protein bL20 family.

The protein localises to the plastid. It is found in the chloroplast. Binds directly to 23S ribosomal RNA and is necessary for the in vitro assembly process of the 50S ribosomal subunit. It is not involved in the protein synthesizing functions of that subunit. The polypeptide is Large ribosomal subunit protein bL20c (Angiopteris evecta (Mule's foot fern)).